Here is a 146-residue protein sequence, read N- to C-terminus: Thyroid hormone-inducible hepatic protein (146 aa).

A disordered region spans residues 83–104; the sequence is KVAGSEENGTAETEEVEDESAS. Acidic residues predominate over residues 94–104; it reads ETEEVEDESAS.

Belongs to the SPOT14 family. As to quaternary structure, homodimer. Heterodimer with MID1IP1. Interacts with THRB and PLAGL1. Mainly expressed in tissues that synthesize triglycerides.

It localises to the nucleus. The protein localises to the cytoplasm. Functionally, plays a role in the regulation of lipogenesis, especially in lactating mammary gland. Important for the biosynthesis of triglycerides with medium-length fatty acid chains. May modulate lipogenesis by interacting with MID1IP1 and preventing its interaction with ACACA. May function as transcriptional coactivator. May modulate the transcription factor activity of THRB. This Homo sapiens (Human) protein is Thyroid hormone-inducible hepatic protein (THRSP).